A 191-amino-acid chain; its full sequence is Elongation factor P (191 aa).

An N6-(3,6-diaminohexanoyl)-5-hydroxylysine modification is found at K34.

Belongs to the elongation factor P family. Post-translationally, may be beta-lysylated on the epsilon-amino group of Lys-34 by the combined action of EpmA and EpmB, and then hydroxylated on the C5 position of the same residue by EpmC (if this protein is present). Lysylation is critical for the stimulatory effect of EF-P on peptide-bond formation. The lysylation moiety may extend toward the peptidyltransferase center and stabilize the terminal 3-CCA end of the tRNA. Hydroxylation of the C5 position on Lys-34 may allow additional potential stabilizing hydrogen-bond interactions with the P-tRNA.

The protein localises to the cytoplasm. Its pathway is protein biosynthesis; polypeptide chain elongation. In terms of biological role, involved in peptide bond synthesis. Alleviates ribosome stalling that occurs when 3 or more consecutive Pro residues or the sequence PPG is present in a protein, possibly by augmenting the peptidyl transferase activity of the ribosome. Modification of Lys-34 is required for alleviation. This chain is Elongation factor P, found in Marinomonas sp. (strain MWYL1).